A 570-amino-acid chain; its full sequence is 5-aminolevulinate synthase, mitochondrial (570 aa).

The N-terminal 53 residues, 1 to 53 (MESVIRSSAKICPFMHSATGSMQSVKALKNANLPAIAQQCPFMGKAMEQRRGY), are a transit peptide targeting the mitochondrion. Arginine 119, serine 232, and lysine 251 together coordinate substrate. Pyridoxal 5'-phosphate contacts are provided by serine 284, histidine 312, and threonine 356. Residue lysine 359 is part of the active site. Lysine 359 is modified (N6-(pyridoxal phosphate)lysine). Residues threonine 388 and threonine 389 each contribute to the pyridoxal 5'-phosphate site. Threonine 474 lines the substrate pocket.

This sequence belongs to the class-II pyridoxal-phosphate-dependent aminotransferase family. As to quaternary structure, homodimer. The cofactor is pyridoxal 5'-phosphate.

It localises to the mitochondrion matrix. The catalysed reaction is succinyl-CoA + glycine + H(+) = 5-aminolevulinate + CO2 + CoA. The protein operates within porphyrin-containing compound metabolism; protoporphyrin-IX biosynthesis; 5-aminolevulinate from glycine: step 1/1. Catalyzes the synthesis of 5-aminolevulinate (ALA) from succinyl-CoA and glycine, the first and rate-limiting step in heme biosynthesis. The polypeptide is 5-aminolevulinate synthase, mitochondrial (HEM1) (Kluyveromyces lactis (strain ATCC 8585 / CBS 2359 / DSM 70799 / NBRC 1267 / NRRL Y-1140 / WM37) (Yeast)).